We begin with the raw amino-acid sequence, 507 residues long: MSKKALLIICDGWGIGDKGKDDVIFNTPTPYWDELLKTYPASQLQASGENVGLPDGQMGNSEVGHLNIGAGRIVYQDLVKINIACRENTIMENPEIKRAYSYAKENNKQIHFMGLVSDGGVHSSLEHLLKLTDIAKEYGISKAYVHCFMDGRDTDPKSGKGFIEELENHLKTTGGKIASIIGRYYAMDRDKRWERVKEAYDLLVEGKGKQAECMVKAMEESYAEGVTDEFIKPIVHVENGKPVAVIEEGDVVIFFNYRNDRAKELTVVLTQQDMPEAGMHTIPGLQYFCMTPYDASFKGVHILFDKENVNNTLGEFLANVGKTQLHIAETEKYAHVTFFFNGGRETPFDSEERILVPSPKVATYDLKPEMSAFEVKDKLVDAINTKKFDFIVVNYANGDMVGHTGIYKAIEKAVVTIDACLHDTVEAAKANDYEVIIIADHGNADHALNEDGTPNTAHSLNPVPFVYVTANKDAKVEDGILADVAPSILHILGLKQPKEMTGKSLIK.

Asp-11 and Ser-61 together coordinate Mn(2+). Ser-61 acts as the Phosphoserine intermediate in catalysis. Residues His-122, 152–153, Arg-183, Arg-189, 258–261, and Lys-332 each bind substrate; these read RD and RNDR. The Mn(2+) site is built by Asp-399, His-403, Asp-440, His-441, and His-458.

Belongs to the BPG-independent phosphoglycerate mutase family. In terms of assembly, monomer. Requires Mn(2+) as cofactor.

It catalyses the reaction (2R)-2-phosphoglycerate = (2R)-3-phosphoglycerate. It functions in the pathway carbohydrate degradation; glycolysis; pyruvate from D-glyceraldehyde 3-phosphate: step 3/5. Its function is as follows. Catalyzes the interconversion of 2-phosphoglycerate and 3-phosphoglycerate. In Parabacteroides distasonis (strain ATCC 8503 / DSM 20701 / CIP 104284 / JCM 5825 / NCTC 11152), this protein is 2,3-bisphosphoglycerate-independent phosphoglycerate mutase.